The following is a 162-amino-acid chain: Interleukin-15 (162 aa).

Residues 1-29 (MRISKPHLRSVSIQCYLCLLLNSHFLTEA) form the signal peptide. Residues 30-48 (GIHVFILGCFSAGLPKTEA) constitute a propeptide that is removed on maturation. Disulfide bonds link C83–C133 and C90–C136. N127 is a glycosylation site (N-linked (GlcNAc...) asparagine).

Belongs to the IL-15/IL-21 family.

Its subcellular location is the secreted. Its function is as follows. Cytokine that plays a major role in the development of inflammatory and protective immune responses to microbial invaders and parasites by modulating immune cells of both the innate and adaptive immune systems. Stimulates the proliferation of natural killer cells, T-cells and B-cells and promotes the secretion of several cytokines. In monocytes, induces the production of IL8 and monocyte chemotactic protein 1/CCL2, two chemokines that attract neutrophils and monocytes respectively to sites of infection. Unlike most cytokines, which are secreted in soluble form, IL15 is expressed in association with its high affinity IL15RA on the surface of IL15-producing cells and delivers signals to target cells that express IL2RB and IL2RG receptor subunits. Binding to its receptor triggers the phosphorylation of JAK1 and JAK3 and the recruitment and subsequent phosphorylation of signal transducer and activator of transcription-3/STAT3 and STAT5. In mast cells, induces the rapid tyrosine phosphorylation of STAT6 and thereby controls mast cell survival and release of cytokines such as IL4. The sequence is that of Interleukin-15 (IL15) from Macaca mulatta (Rhesus macaque).